The sequence spans 269 residues: UPF0354 protein YtpQ (269 aa).

Belongs to the UPF0354 family.

This Bacillus subtilis (strain 168) protein is UPF0354 protein YtpQ (ytpQ).